Reading from the N-terminus, the 66-residue chain is Large ribosomal subunit protein uL29 (66 aa).

It belongs to the universal ribosomal protein uL29 family.

This is Large ribosomal subunit protein uL29 from Francisella philomiragia subsp. philomiragia (strain ATCC 25017 / CCUG 19701 / FSC 153 / O#319-036).